We begin with the raw amino-acid sequence, 306 residues long: tRNA (guanine-N(7)-)-methyltransferase (306 aa).

Positions 1–19 (MSSTAPLDSKATEQITTAA) are enriched in polar residues. The tract at residues 1 to 65 (MSSTAPLDSK…EASPELPSDE (65 aa)) is disordered. Residues G121, 144–145 (EI), 180–181 (NA), and C200 contribute to the S-adenosyl-L-methionine site. The active site involves D203. Residue 278-280 (TEE) coordinates S-adenosyl-L-methionine.

This sequence belongs to the class I-like SAM-binding methyltransferase superfamily. TrmB family. Forms a complex with TRM82.

It localises to the nucleus. It catalyses the reaction guanosine(46) in tRNA + S-adenosyl-L-methionine = N(7)-methylguanosine(46) in tRNA + S-adenosyl-L-homocysteine. It participates in tRNA modification; N(7)-methylguanine-tRNA biosynthesis. Its function is as follows. Catalyzes the formation of N(7)-methylguanine at position 46 (m7G46) in tRNA. The protein is tRNA (guanine-N(7)-)-methyltransferase of Lodderomyces elongisporus (strain ATCC 11503 / CBS 2605 / JCM 1781 / NBRC 1676 / NRRL YB-4239) (Yeast).